We begin with the raw amino-acid sequence, 61 residues long: SPbeta prophage-derived uncharacterized protein YotK (61 aa).

A coiled-coil region spans residues 7-57; the sequence is SIQTLLNKMDRQMKTVKEAIEEKDLQRAHRNLINLADNNEELMQEIRWVKK.

In Bacillus subtilis (strain 168), this protein is SPbeta prophage-derived uncharacterized protein YotK (yotK).